A 438-amino-acid chain; its full sequence is Minor myo-inositol transporter IolF (438 aa).

12 helical membrane passes run 15–35, 49–69, 86–106, 108–128, 147–167, 171–191, 230–250, 268–288, 295–312, 317–334, 359–379, and 387–407; these read IAAA…SAGL, IGLL…ALLG, MLVY…PMLL, GYII…TIIA, WAAG…LGLL, IVFA…IRLP, ILFL…MGFF, LLQM…FMPF, TVFG…TLFL, GLPI…NNGA, LMFF…PMII, and MAAI…LFAP.

This sequence belongs to the major facilitator superfamily. Sugar transporter (TC 2.A.1.1) family.

The protein localises to the cell membrane. It functions in the pathway polyol metabolism; myo-inositol degradation into acetyl-CoA. Functionally, minor myo-inositol uptake transporter. The protein is Minor myo-inositol transporter IolF (iolF) of Bacillus subtilis (strain 168).